Here is a 225-residue protein sequence, read N- to C-terminus: Probable manganese catalase (225 aa).

Residue E37 coordinates Mn(2+). Residues D58 and D62 each contribute to the Ca(2+) site. 4 residues coordinate Mn(2+): E67, H70, E138, and H171. Residue S204 participates in Ca(2+) binding. Positions 204-225 are disordered; that stretch reads STPGRYVQDPNPTEPSFSNPRR. Residues 213-225 are compositionally biased toward polar residues; sequence PNPTEPSFSNPRR.

The protein belongs to the manganese catalase family. It depends on Ca(2+) as a cofactor. The cofactor is Mn(2+).

The enzyme catalyses 2 H2O2 = O2 + 2 H2O. Catalyzes the decomposition of hydrogen peroxide into water and oxygen. The sequence is that of Probable manganese catalase from Clostridium acetobutylicum (strain ATCC 824 / DSM 792 / JCM 1419 / IAM 19013 / LMG 5710 / NBRC 13948 / NRRL B-527 / VKM B-1787 / 2291 / W).